The chain runs to 284 residues: 4-hydroxybenzoate octaprenyltransferase (284 aa).

7 consecutive transmembrane segments (helical) span residues 33–53 (VIAA…LGVF), 93–113 (IGLF…MNPL), 136–156 (YLPQ…AWAA), 159–179 (GELP…TIAY), 209–229 (LVIG…GQHY), 231–248 (LGQS…LFVY), and 264–284 (AFLN…IAFW).

The protein belongs to the UbiA prenyltransferase family. Mg(2+) is required as a cofactor.

The protein localises to the cell inner membrane. The catalysed reaction is all-trans-octaprenyl diphosphate + 4-hydroxybenzoate = 4-hydroxy-3-(all-trans-octaprenyl)benzoate + diphosphate. It functions in the pathway cofactor biosynthesis; ubiquinone biosynthesis. In terms of biological role, catalyzes the prenylation of para-hydroxybenzoate (PHB) with an all-trans polyprenyl group. Mediates the second step in the final reaction sequence of ubiquinone-8 (UQ-8) biosynthesis, which is the condensation of the polyisoprenoid side chain with PHB, generating the first membrane-bound Q intermediate 3-octaprenyl-4-hydroxybenzoate. In Vibrio campbellii (strain ATCC BAA-1116), this protein is 4-hydroxybenzoate octaprenyltransferase.